The chain runs to 146 residues: Small ribosomal subunit protein bS6 (146 aa).

Residues 100–146 (QSAMMRKRDDDDRGDRPDRGDRGRGPRPDRPPRRPRDDAAASDEGGF) are disordered. The segment covering 105–138 (RKRDDDDRGDRPDRGDRGRGPRPDRPPRRPRDDA) has biased composition (basic and acidic residues).

Belongs to the bacterial ribosomal protein bS6 family.

Functionally, binds together with bS18 to 16S ribosomal RNA. This is Small ribosomal subunit protein bS6 from Methylocella silvestris (strain DSM 15510 / CIP 108128 / LMG 27833 / NCIMB 13906 / BL2).